The primary structure comprises 376 residues: Beta-centractin (376 aa).

Methionine 1 carries the N-acetylmethionine modification. Tyrosine 4 is modified (3'-nitrotyrosine).

Belongs to the actin family. ARP1 subfamily.

It is found in the cytoplasm. The protein localises to the cytoskeleton. It localises to the microtubule organizing center. Its subcellular location is the centrosome. Component of a multi-subunit complex involved in microtubule based vesicle motility. It is associated with the centrosome. The chain is Beta-centractin (ACTR1B) from Bos taurus (Bovine).